Reading from the N-terminus, the 557-residue chain is MKVDYEQLCKLYDDTCRTKNVQFSYGTAGFRTLAKNLDTVMFSTGILAVLRSLKLQGQYVGVMITASHNPYQDNGVKIVEPDGSMLLATWEPYAMQLANAASFATNFEEFRVELAKLIEHEKIDLNTTVVPHIVVGRDSRESSPYLLRCLTSSMASVFHAQVLDLGCVTTPQLHYITDLSNRRKLEGDTAPVATEQDYYSFFIGAFNELFATYQLEKRLSVPKLFIDTANGIGGPQLKKLLASEDWDVPAEQVEVINDRSDVPELLNFECGADYVKTNQRLPKGLSPSSFDSLYCSFDGDADRVVFYYVDSGSKFHLLDGDKISTLFAKFLSKQLELAHLEHSLKIGVVQTAYANGSSTAYIKNTLHCPVSCTKTGVKHLHHEAATQYDIGIYFEANGHGTIIFSEKFHRTIKSELSKSKLNGDTLALRTLKCFSELINQTVGDAISDMLAVLATLAILKMSPMDWDEEYTDLPNKLVKCIVPDRSIFQTTDQERKLLNPVGLQDKIDLVVAKYPMGRSFVRASGTEDAVRVYAECKDSSKLGQFCDEVVEHVKASA.

Serine 67 serves as the catalytic Phosphoserine intermediate. Residues serine 67, aspartate 298, aspartate 300, and aspartate 302 each coordinate Mg(2+). Serine 67 is subject to Phosphoserine. Residues 395-397 (EAN), 522-526 (RASGT), and arginine 531 contribute to the substrate site.

Belongs to the phosphohexose mutase family. Requires Mg(2+) as cofactor.

The protein localises to the cytoplasm. The protein resides in the nucleus. The catalysed reaction is N-acetyl-alpha-D-glucosamine 1-phosphate = N-acetyl-D-glucosamine 6-phosphate. Its pathway is nucleotide-sugar biosynthesis; UDP-N-acetyl-alpha-D-glucosamine biosynthesis; N-acetyl-alpha-D-glucosamine 1-phosphate from alpha-D-glucosamine 6-phosphate (route I): step 2/2. Its function is as follows. Catalyzes the conversion of GlcNAc-6-P into GlcNAc-1-P during the synthesis of uridine diphosphate/UDP-GlcNAc, which is a biosynthetic precursor of chitin and also supplies the amino sugars for N-linked oligosaccharides of glycoproteins. Also has phosphoglucomutase activity. This chain is Phosphoacetylglucosamine mutase, found in Saccharomyces cerevisiae (strain ATCC 204508 / S288c) (Baker's yeast).